The primary structure comprises 551 residues: Glucans biosynthesis protein D (551 aa).

Positions 1 to 32 (MNRRRFIKGSMAMAAVCGSSGIASLFSQAAFA) form a signal peptide, tat-type signal.

This sequence belongs to the OpgD/OpgG family. Predicted to be exported by the Tat system. The position of the signal peptide cleavage has not been experimentally proven.

The protein resides in the periplasm. The protein operates within glycan metabolism; osmoregulated periplasmic glucan (OPG) biosynthesis. Functionally, probably involved in the control of the structural glucose backbone of osmoregulated periplasmic glucans (OPGs). This is Glucans biosynthesis protein D (mdoD) from Salmonella typhimurium (strain LT2 / SGSC1412 / ATCC 700720).